A 150-amino-acid chain; its full sequence is Mating pheromone 1 (150 aa).

The signal sequence occupies residues 1-16 (MKAIFIILAILMVTQA). A propeptide spanning residues 17 to 52 (FKMTSKVNTKLQSQIQSKFQSKNKLASTFQTSSKLK) is cleaved from the precursor.

It is found in the secreted. In terms of biological role, mating ciliate pheromones (or gamones) are diffusible extracellular communication signals that distinguish different intraspecific classes of cells commonly referred to as 'mating types'. They prepare the latter for conjugation by changing their cell surface properties. This chain is Mating pheromone 1, found in Euplotoides octocarinatus (Freshwater ciliate).